The primary structure comprises 710 residues: multidrug resistance regulator 2 (710 aa).

The zn(2)-C6 fungal-type DNA-binding region spans 11–37; the sequence is CDACRSRKIKCNRQTPCASCHKSKRDC. The next 2 membrane-spanning stretches (helical) occupy residues 475 to 495 and 525 to 545; these read DLVIFSVNFLLVYMYYSLYLF and LFLAYFNLNYIHLVLMITNFL.

Its subcellular location is the nucleus. The protein resides in the membrane. Its function is as follows. Transcription factor that controls the expression of CDR1, the major multidrug efflux pump. Required for yeast cell adherence to silicone substrate and plays a role in virulence. This Candida albicans (strain SC5314 / ATCC MYA-2876) (Yeast) protein is multidrug resistance regulator 2.